The primary structure comprises 76 residues: Large ribosomal subunit protein eL38 (76 aa).

Belongs to the eukaryotic ribosomal protein eL38 family.

In Lysiphlebus testaceipes (Greenbugs aphid parastoid), this protein is Large ribosomal subunit protein eL38 (RpL38).